A 207-amino-acid polypeptide reads, in one-letter code: Histone H1-like protein HC2 (207 aa).

Composition is skewed to basic residues over residues 1–50 (MLGV…KTVA) and 59–72 (PAAK…APVR). Residues 1–72 (MLGVQKKRST…KTAAKKAPVR (72 aa)) form a disordered region. 3 consecutive repeat copies span residues 35-58 (VRKV…AARK), 71-94 (VRKV…AARK), and 113-136 (VRKV…AARK). Residues 35 to 136 (VRKVAAKKTV…VAKKAVAARK (102 aa)) are 3 X 24 AA repeats of V-R-K-V-A-A-K-K-T-V-A-R-K-T-V-A-K-K-A-V-A-A-R-K.

Belongs to the histone H1/H5 family. HCT subfamily.

Functionally, might have a role in establishing the nucleoid structure of elementary bodies. The protein is Histone H1-like protein HC2 (hctB) of Chlamydia muridarum (strain MoPn / Nigg).